The following is a 484-amino-acid chain: tRNA-2-methylthio-N(6)-dimethylallyladenosine synthase (484 aa).

The 118-residue stretch at 36–153 folds into the MTTase N-terminal domain; sequence GKLYIKTHGC…LPELIRARRE (118 aa). [4Fe-4S] cluster-binding residues include Cys-45, Cys-82, Cys-116, Cys-190, Cys-194, and Cys-197. Residues 176-415 enclose the Radical SAM core domain; that stretch reads RAEGPSAFVS…HISAHAASIS (240 aa). A TRAM domain is found at 416-479; sequence QSMVGSVQRV…SNSLRGRIQL (64 aa). Residues 428–450 are disordered; the sequence is EGPSRRDPNELTGKSENMRPVNF.

The protein belongs to the methylthiotransferase family. MiaB subfamily. Monomer. It depends on [4Fe-4S] cluster as a cofactor.

The protein resides in the cytoplasm. It carries out the reaction N(6)-dimethylallyladenosine(37) in tRNA + (sulfur carrier)-SH + AH2 + 2 S-adenosyl-L-methionine = 2-methylsulfanyl-N(6)-dimethylallyladenosine(37) in tRNA + (sulfur carrier)-H + 5'-deoxyadenosine + L-methionine + A + S-adenosyl-L-homocysteine + 2 H(+). In terms of biological role, catalyzes the methylthiolation of N6-(dimethylallyl)adenosine (i(6)A), leading to the formation of 2-methylthio-N6-(dimethylallyl)adenosine (ms(2)i(6)A) at position 37 in tRNAs that read codons beginning with uridine. The chain is tRNA-2-methylthio-N(6)-dimethylallyladenosine synthase from Xanthomonas oryzae pv. oryzae (strain KACC10331 / KXO85).